The primary structure comprises 213 residues: Thymidylate kinase (213 aa).

10 to 17 (GLEGAGKT) contacts ATP.

It belongs to the thymidylate kinase family.

The enzyme catalyses dTMP + ATP = dTDP + ADP. In terms of biological role, phosphorylation of dTMP to form dTDP in both de novo and salvage pathways of dTTP synthesis. In Salmonella choleraesuis (strain SC-B67), this protein is Thymidylate kinase.